We begin with the raw amino-acid sequence, 450 residues long: Bifunctional protein GlmU (450 aa).

The tract at residues methionine 1–arginine 229 is pyrophosphorylase. Residues leucine 8–glycine 11, lysine 22, glutamine 75, glycine 80–threonine 81, tyrosine 103–aspartate 105, glycine 141, glutamate 155, asparagine 170, and asparagine 227 each bind UDP-N-acetyl-alpha-D-glucosamine. Aspartate 105 serves as a coordination point for Mg(2+). Asparagine 227 is a binding site for Mg(2+). The segment at threonine 230–aspartate 250 is linker. Positions glycine 251–glutamine 450 are N-acetyltransferase. Residues arginine 316 and lysine 334 each coordinate UDP-N-acetyl-alpha-D-glucosamine. The Proton acceptor role is filled by histidine 346. UDP-N-acetyl-alpha-D-glucosamine-binding residues include tyrosine 349 and asparagine 360. Residues alanine 363, asparagine 369 to tyrosine 370, serine 388, threonine 406, and arginine 423 contribute to the acetyl-CoA site.

This sequence in the N-terminal section; belongs to the N-acetylglucosamine-1-phosphate uridyltransferase family. In the C-terminal section; belongs to the transferase hexapeptide repeat family. As to quaternary structure, homotrimer. Requires Mg(2+) as cofactor.

It localises to the cytoplasm. The catalysed reaction is alpha-D-glucosamine 1-phosphate + acetyl-CoA = N-acetyl-alpha-D-glucosamine 1-phosphate + CoA + H(+). It carries out the reaction N-acetyl-alpha-D-glucosamine 1-phosphate + UTP + H(+) = UDP-N-acetyl-alpha-D-glucosamine + diphosphate. It functions in the pathway nucleotide-sugar biosynthesis; UDP-N-acetyl-alpha-D-glucosamine biosynthesis; N-acetyl-alpha-D-glucosamine 1-phosphate from alpha-D-glucosamine 6-phosphate (route II): step 2/2. Its pathway is nucleotide-sugar biosynthesis; UDP-N-acetyl-alpha-D-glucosamine biosynthesis; UDP-N-acetyl-alpha-D-glucosamine from N-acetyl-alpha-D-glucosamine 1-phosphate: step 1/1. The protein operates within bacterial outer membrane biogenesis; LPS lipid A biosynthesis. In terms of biological role, catalyzes the last two sequential reactions in the de novo biosynthetic pathway for UDP-N-acetylglucosamine (UDP-GlcNAc). The C-terminal domain catalyzes the transfer of acetyl group from acetyl coenzyme A to glucosamine-1-phosphate (GlcN-1-P) to produce N-acetylglucosamine-1-phosphate (GlcNAc-1-P), which is converted into UDP-GlcNAc by the transfer of uridine 5-monophosphate (from uridine 5-triphosphate), a reaction catalyzed by the N-terminal domain. The protein is Bifunctional protein GlmU of Dinoroseobacter shibae (strain DSM 16493 / NCIMB 14021 / DFL 12).